The sequence spans 507 residues: AMSH-like ubiquitin thioesterase 1 (507 aa).

One can recognise an MPN domain in the interval 333-463 (LHIATSMMDT…IFRLTTPGGM (131 aa)). Residues H411, H413, D424, H426, C469, H475, and H477 each coordinate Zn(2+). A JAMM motif motif is present at residues 411 to 424 (HTHPTQSCFMSSID).

The protein belongs to the peptidase M67C family. Requires Zn(2+) as cofactor.

Its subcellular location is the membrane. The protein localises to the cytoplasm. Functionally, zinc metalloprotease that cleaves 'Lys-48'- and 'Lys-63'-linked polyubiquitin chains. This chain is AMSH-like ubiquitin thioesterase 1 (AMSH1), found in Arabidopsis thaliana (Mouse-ear cress).